The chain runs to 233 residues: Zein-alpha PMS2 (233 aa).

A signal peptide spans 1 to 21 (MAAKIFCFLMLLGLSASVATA).

This sequence belongs to the zein family.

Its function is as follows. Zeins are major seed storage proteins. This Zea mays (Maize) protein is Zein-alpha PMS2 (ZMPMS2).